A 623-amino-acid polypeptide reads, in one-letter code: F-box protein FBX14 (623 aa).

Residues L18 to P48 are disordered. Polar residues predominate over residues A33–S45. In terms of domain architecture, F-box spans V54–N97. K119 lines the 1D-myo-inositol hexakisphosphate pocket. The interaction with auxin-responsive proteins stretch occupies residues D126–F127. 1D-myo-inositol hexakisphosphate contacts are provided by residues K158–R159 and R391. The interaction with auxin-responsive proteins stretch occupies residues P394 to E399. Residue V447–R449 participates in 1D-myo-inositol hexakisphosphate binding. The interaction with auxin-responsive proteins stretch occupies residues C451–R455. R482 contacts 1D-myo-inositol hexakisphosphate. The interval A510 to F511 is interaction with auxin-responsive proteins. 1D-myo-inositol hexakisphosphate is bound by residues Q530–K531 and R555.

As to quaternary structure, part of a SCF (SKP1-cullin-F-box) protein ligase complex. May interact with auxin and auxin-responsive proteins.

It localises to the nucleus. The protein operates within protein modification; protein ubiquitination. The protein is F-box protein FBX14 (FBX14) of Arabidopsis thaliana (Mouse-ear cress).